The sequence spans 766 residues: Semaphorin-4E (766 aa).

A signal peptide spans 1 to 24 (MMSLLAVLCVLYVWSPAMLTGGLG). Residues 25-664 (STLDSLPRKT…LHHVKEKERT (640 aa)) lie on the Extracellular side of the membrane. The Sema domain occupies 27-499 (LDSLPRKTVP…SEVGVVQLSI (473 aa)). The N-linked (GlcNAc...) asparagine glycan is linked to asparagine 52. Disulfide bonds link cysteine 100-cysteine 111, cysteine 129-cysteine 138, cysteine 261-cysteine 373, and cysteine 285-cysteine 329. The N-linked (GlcNAc...) asparagine glycan is linked to asparagine 433. Residues 501–552 (ECGRYQTCLDCVLARDPHCGWDLDTEHCATINSIHRTRSSTVIQSLNDGDAS) form the PSI domain. Cystine bridges form between cysteine 502–cysteine 519 and cysteine 511–cysteine 528. The Ig-like C2-type domain occupies 555 to 640 (PAIGVSKPVN…QRKYQTQHVA (86 aa)). N-linked (GlcNAc...) asparagine glycosylation is found at asparagine 564 and asparagine 612. A disulfide bond links cysteine 577 and cysteine 623. Residues 665–685 (LVAMVVILSLVLAALLIWNLY) form a helical membrane-spanning segment. Over 686 to 766 (KGHLSLPCLH…LKYIDDESEI (81 aa)) the chain is Cytoplasmic. The tract at residues 724–750 (FNSNNNHANDQRYSSSRETDRLSTTAG) is disordered.

This sequence belongs to the semaphorin family.

Its subcellular location is the membrane. The polypeptide is Semaphorin-4E (sema4e) (Danio rerio (Zebrafish)).